We begin with the raw amino-acid sequence, 296 residues long: Maltose/maltodextrin transport system permease protein MalG (296 aa).

The Cytoplasmic segment spans residues Met-1–Arg-12. Residues Leu-13 to Ile-35 traverse the membrane as a helical segment. At Ala-36–Ser-88 the chain is on the periplasmic side. The ABC transmembrane type-1 domain occupies Leu-85 to Ala-281. A helical membrane pass occupies residues Val-89–Ala-111. The Cytoplasmic portion of the chain corresponds to Arg-112–Lys-123. A helical membrane pass occupies residues Gly-124–Leu-143. Topologically, residues Phe-144–Pro-152 are periplasmic. The chain crosses the membrane as a helical span at residues Phe-153–Trp-175. At Thr-176–Arg-204 the chain is on the cytoplasmic side. The chain crosses the membrane as a helical span at residues Leu-205 to Ile-227. The Periplasmic segment spans residues Thr-228–Asn-257. A helical transmembrane segment spans residues Tyr-258–Leu-280. Residues Ala-281–Gly-296 lie on the Cytoplasmic side of the membrane.

Belongs to the binding-protein-dependent transport system permease family. MalFG subfamily. The complex is composed of two ATP-binding proteins (MalK), two transmembrane proteins (MalG and MalF) and a solute-binding protein (MalE).

The protein localises to the cell inner membrane. In terms of biological role, part of the ABC transporter complex MalEFGK involved in maltose/maltodextrin import. Probably responsible for the translocation of the substrate across the membrane. The sequence is that of Maltose/maltodextrin transport system permease protein MalG (malG) from Salmonella typhimurium (strain LT2 / SGSC1412 / ATCC 700720).